Here is a 70-residue protein sequence, read N- to C-terminus: MSNNMAKIAEARKTVEQLKLEVNIDRMKVSQAAAELLAFCETHAKDDPLVTPVPAAENPFRDKRLFCTLL.

Position 67 is a cysteine methyl ester (Cys-67). Residue Cys-67 is the site of S-geranylgeranyl cysteine attachment. Residues 68–70 constitute a propeptide, removed in mature form; sequence TLL.

The protein belongs to the G protein gamma family. G proteins are composed of 3 units, alpha, beta and gamma. In terms of tissue distribution, detected in the olfactory epithelium, the vomeronasal epithelium and, to a lesser extent, the olfactory bulb.

It is found in the cell membrane. Guanine nucleotide-binding proteins (G proteins) are involved as a modulator or transducer in various transmembrane signaling systems. The beta and gamma chains are required for the GTPase activity, for replacement of GDP by GTP, and for G protein-effector interaction. This subunit may have a very specific role in the development and turnover of olfactory and vomeronasal neurons. This chain is Guanine nucleotide-binding protein G(I)/G(S)/G(O) subunit gamma-8 (Gng8), found in Rattus norvegicus (Rat).